Consider the following 221-residue polypeptide: uncharacterized protein (221 aa).

Composition is skewed to low complexity over residues 1–27 and 140–162; these read MNNN…NNNN and TTTS…NSSS. 2 disordered regions span residues 1–28 and 140–205; these read MNNN…NNNE and TTTS…NIGG.

This is an uncharacterized protein from Dictyostelium discoideum (Social amoeba).